The sequence spans 293 residues: Phycoerythrin class 2 subunit gamma, linker polypeptide (293 aa).

Cys49 provides a ligand contact to phycourobilin. The PBS-linker domain occupies 50-229 (AAMGIGIGPR…LGGMKVAISD (180 aa)).

Post-translationally, contains one covalently linked phycourobilin chromophore.

The protein resides in the cellular thylakoid membrane. Functionally, this protein is a bile pigment-bearing rod linker polypeptide that associates with C-phycoerythrin. In Synechococcus sp. (strain WH8020), this protein is Phycoerythrin class 2 subunit gamma, linker polypeptide (mpeC).